The chain runs to 94 residues: Selenoprotein K (94 aa).

The helical transmembrane segment at 20–42 threads the bilayer; the sequence is LSLITDFFWGIAEFVVLFFKTLL. The interval 47–94 is disordered; it reads KKGRGYRNSSDSRYDDGRGPPGNPPRRMGRISHLHGPSPPPMAGGUGR. A non-standard amino acid (selenocysteine) is located at residue U92.

It belongs to the selenoprotein K family. As to quaternary structure, interacts with DERL1, DERL2, DERL3 and SELENOS. The SELENOK-SELENOS complex interacts with VCP. Interacts with ZDHHC6. Cleaved by CAPN2/m-calpain in resting macrophages but not in activated macrophages. Macrophage activation up-regulates expression of the calpain inhibitor CAST/calpastatin, resulting in inhibition of CAPN2 activity. Post-translationally, truncated SELENOK proteins produced by failed UGA/Sec decoding are ubiquitinated by the CRL2(KLHDC2) complex, which recognizes the diglycine (Gly-Gly) at the C-terminus of truncated SELENOK proteins.

Its subcellular location is the endoplasmic reticulum membrane. The protein localises to the cell membrane. Required for Ca(2+) flux in immune cells and plays a role in T-cell proliferation and in T-cell and neutrophil migration. Involved in endoplasmic reticulum-associated degradation (ERAD) of soluble glycosylated proteins. Required for palmitoylation and cell surface expression of CD36 and involved in macrophage uptake of low-density lipoprotein and in foam cell formation. Together with ZDHHC6, required for palmitoylation of ITPR1 in immune cells, leading to regulate ITPR1 stability and function. Plays a role in protection of cells from ER stress-induced apoptosis. Protects cells from oxidative stress when overexpressed in cardiomyocytes. The chain is Selenoprotein K from Chinchilla lanigera (Long-tailed chinchilla).